The sequence spans 646 residues: Stage V sporulation protein D (646 aa).

Ser294 functions as the Acyl-ester intermediate in the catalytic mechanism. Positions 580 to 638 (DTKTIEVPNVVGMSVSDLESLLVNLNVDASGKGSKIVKQSPAAGTKVKEGSKIRVYLTE) constitute a PASTA domain.

This sequence belongs to the transpeptidase family.

The protein resides in the cell membrane. It carries out the reaction Preferential cleavage: (Ac)2-L-Lys-D-Ala-|-D-Ala. Also transpeptidation of peptidyl-alanyl moieties that are N-acyl substituents of D-alanine.. It participates in cell wall biogenesis; peptidoglycan biosynthesis. In terms of biological role, penicillin-binding protein with an unknown catalytic activity. May have a specialized role in the morphogenesis of spore cortex, which is a modified form of peptidoglycan. Spore cortex formation is determined primarily by the mother cell. In Bacillus subtilis (strain 168), this protein is Stage V sporulation protein D (spoVD).